The sequence spans 406 residues: Tryptophan synthase beta chain (406 aa).

Lysine 97 bears the N6-(pyridoxal phosphate)lysine mark.

It belongs to the TrpB family. Tetramer of two alpha and two beta chains. The cofactor is pyridoxal 5'-phosphate.

The catalysed reaction is (1S,2R)-1-C-(indol-3-yl)glycerol 3-phosphate + L-serine = D-glyceraldehyde 3-phosphate + L-tryptophan + H2O. It participates in amino-acid biosynthesis; L-tryptophan biosynthesis; L-tryptophan from chorismate: step 5/5. The beta subunit is responsible for the synthesis of L-tryptophan from indole and L-serine. This chain is Tryptophan synthase beta chain, found in Lacticaseibacillus casei (strain BL23) (Lactobacillus casei).